A 336-amino-acid polypeptide reads, in one-letter code: Glyceraldehyde-3-phosphate dehydrogenase (336 aa).

NAD(+)-binding positions include 12–13 (RI), D34, and M79. D-glyceraldehyde 3-phosphate-binding positions include 150-152 (SCT), T181, 210-211 (TG), and R233. C151 (nucleophile) is an active-site residue. N316 contributes to the NAD(+) binding site.

The protein belongs to the glyceraldehyde-3-phosphate dehydrogenase family. As to quaternary structure, homotetramer.

It localises to the cytoplasm. The enzyme catalyses D-glyceraldehyde 3-phosphate + phosphate + NAD(+) = (2R)-3-phospho-glyceroyl phosphate + NADH + H(+). It participates in carbohydrate degradation; glycolysis; pyruvate from D-glyceraldehyde 3-phosphate: step 1/5. This Echinococcus multilocularis (Fox tapeworm) protein is Glyceraldehyde-3-phosphate dehydrogenase.